A 264-amino-acid polypeptide reads, in one-letter code: tRNA (guanine-N(1)-)-methyltransferase (264 aa).

S-adenosyl-L-methionine contacts are provided by residues Gly-120 and 140-145 (IGDYVL).

Belongs to the RNA methyltransferase TrmD family. As to quaternary structure, homodimer.

The protein localises to the cytoplasm. It carries out the reaction guanosine(37) in tRNA + S-adenosyl-L-methionine = N(1)-methylguanosine(37) in tRNA + S-adenosyl-L-homocysteine + H(+). Its function is as follows. Specifically methylates guanosine-37 in various tRNAs. The protein is tRNA (guanine-N(1)-)-methyltransferase of Halorhodospira halophila (strain DSM 244 / SL1) (Ectothiorhodospira halophila (strain DSM 244 / SL1)).